Here is a 777-residue protein sequence, read N- to C-terminus: UPF0313 protein VP1980 (777 aa).

The Radical SAM core domain maps to 363 to 642; sequence AYDMIKTSVN…KALLRYHDPA (280 aa). Positions 377, 381, and 384 each coordinate [4Fe-4S] cluster. Residues 675 to 777 are disordered; the sequence is AQTPAQRRKS…PAGQRKPKRR (103 aa). Residues 680-698 show a composition bias toward basic residues; that stretch reads QRRKSGRHGANRFATKHTK. Residues 709-719 show a composition bias toward basic and acidic residues; sequence KRAEGGSKDGK. Positions 736-747 are enriched in polar residues; it reads PASNGQRPSGNG. Over residues 755-769 the composition is skewed to low complexity; it reads KPQGQGRPQGQGKPA.

Belongs to the UPF0313 family. [4Fe-4S] cluster is required as a cofactor.

In Vibrio parahaemolyticus serotype O3:K6 (strain RIMD 2210633), this protein is UPF0313 protein VP1980.